Consider the following 867-residue polypeptide: Valine--tRNA ligase (867 aa).

Residues 42-52 carry the 'HIGH' region motif; that stretch reads PNITGKIHMGH. Positions 521-525 match the 'KMSKS' region motif; sequence KMSKS. An ATP-binding site is contributed by Lys-524. The stretch at 794 to 867 forms a coiled coil; sequence LGTLIDVKSE…QIISDLEAKA (74 aa).

The protein belongs to the class-I aminoacyl-tRNA synthetase family. ValS type 1 subfamily. In terms of assembly, monomer.

The protein localises to the cytoplasm. The catalysed reaction is tRNA(Val) + L-valine + ATP = L-valyl-tRNA(Val) + AMP + diphosphate. Catalyzes the attachment of valine to tRNA(Val). As ValRS can inadvertently accommodate and process structurally similar amino acids such as threonine, to avoid such errors, it has a 'posttransfer' editing activity that hydrolyzes mischarged Thr-tRNA(Val) in a tRNA-dependent manner. This chain is Valine--tRNA ligase, found in Fervidobacterium nodosum (strain ATCC 35602 / DSM 5306 / Rt17-B1).